A 78-amino-acid polypeptide reads, in one-letter code: Xibalbin-13 1 (78 aa).

The N-terminal stretch at 1 to 27 is a signal peptide; that stretch reads MKEANTRRYIHLCLVVVLVSTIITTEA. A propeptide spanning residues 28-31 is cleaved from the precursor; it reads EDDR. 4 disulfides stabilise this stretch: cysteine 34–cysteine 49, cysteine 41–cysteine 54, cysteine 48–cysteine 65, and cysteine 56–cysteine 63. The residue at position 76 (serine 76) is a Serine amide.

Belongs to the xibalbin-13 family. Expressed by the venom gland.

It is found in the secreted. Probable neurotoxin. Strongly inhibits voltage-gated potassium channels (Kv1.1/KCNA1, Kv1.2/KCNA2, Kv1.3/KCNA3, and Kv1.6/KCNA6) and mildly inhibits sodium channels (Nav1.2/SCN2A, Nav1.4/SCN4A, Nav1.5/SCN5A, Nav1.6/SCN8A, and BgNav). Induces activation of protein kinase A type II (PKA-II) and MAP kinase Erk1/2 in primary nociceptive and non-nociceptive sensory neurons. Does not show cytotoxic activity. Does not have an impact on Ca2+, cAMP, and NO signaling in the cell types analyzed. Does not interfere with the adhesion of leukocytes to endothelial cells. The sequence is that of Xibalbin-13 1 from Xibalbanus tulumensis (Blind cave remipede).